Consider the following 260-residue polypeptide: CD27 antigen (260 aa).

A signal peptide spans 1–19 (MARPHPWWLCVLGTLVGLS). Over 20 to 191 (ATPAPKSCPE…RSLCSSDFIR (172 aa)) the chain is Extracellular. 3 TNFR-Cys repeats span residues 26-63 (SCPERHYWAQGKLCCQMCEPGTFLVKDCDQHRKAAQCD), 64-104 (PCIP…NAEC), and 105-141 (ACRNGWQCRDKECTECDPLPNPSLTARSSQALSPHPQ). 8 cysteine pairs are disulfide-bonded: Cys-27–Cys-39, Cys-40–Cys-53, Cys-43–Cys-62, Cys-65–Cys-81, Cys-84–Cys-96, Cys-87–Cys-104, Cys-106–Cys-120, and Cys-112–Cys-117. An N-linked (GlcNAc...) asparagine glycan is attached at Asn-95. Ser-127 is a glycosylation site (O-linked (GalNAc...) serine). Residues 192 to 212 (ILVIFSGMFLVFTLAGALFLH) traverse the membrane as a helical segment. The Cytoplasmic segment spans residues 213–260 (QRRKYRSNKGESPVEPAEPCHYSCPREEEGSTIPIQEDYRKPEPACSP). Ser-219 carries the phosphoserine modification. Residues 219–260 (SNKGESPVEPAEPCHYSCPREEEGSTIPIQEDYRKPEPACSP) are disordered. A compositionally biased stretch (basic and acidic residues) spans 249 to 260 (EDYRKPEPACSP).

As to quaternary structure, homodimer. Interacts with SIVA1; may play a role in apoptosis through association with SIVA1. Interacts with TRAF2. Interacts ith PTPN6. Phosphorylated. In terms of processing, N-glycosylated. Post-translationally, O-glycosylated with core 1 or possibly core 8 glycans. Found in most T-lymphocytes.

It localises to the cell membrane. Functionally, costimulatory immune-checkpoint receptor expressed at the surface of T-cells, NK-cells and B-cells which binds to and is activated by its ligand CD70/CD27L expressed by B-cells. The CD70-CD27 signaling pathway mediates antigen-specific T-cell activation and expansion which in turn provides immune surveillance of B-cells. Mechanistically, CD70 ligation activates the TRAF2-PTPN6 axis that subsequently inhibits LCK phosphorylation to promote phenotypic and transcriptional adaptations of T-cell memory. In addition, activation by CD70 on early progenitor cells provides a negative feedback signal to leukocyte differentiation during immune activation and thus modulates hematopoiesis. Negatively regulates the function of Th2 lymphocytes in the adipose tissue. In Homo sapiens (Human), this protein is CD27 antigen.